The sequence spans 283 residues: MAEITASLVKELRERTGAGMMECKKALVEANGDIELAIDNMRKSGQAKAAKKAGRVAAEGVILARVASGFGVLVEMNCETDFVAKDAGFLDLANEVADFAVANKGTTIEALAAQFEEKRASLVAKIGENMNIRRIQYLEGEIIAQYLHGAKIGVLVAGQGSDEELKKVAMHVAASKPEFVNPEDVSAAVVEHERQIQIEIAMNSGKPKEIAEKMVEGRMKKFTGEVSLTGQPFVMDPSQSVGDYLKSVATSVTNFIRLEVGEGIEKVEEDFAAEVAKITAGNA.

The tract at residues 80 to 83 (TDFV) is involved in Mg(2+) ion dislocation from EF-Tu.

The protein belongs to the EF-Ts family.

Its subcellular location is the cytoplasm. In terms of biological role, associates with the EF-Tu.GDP complex and induces the exchange of GDP to GTP. It remains bound to the aminoacyl-tRNA.EF-Tu.GTP complex up to the GTP hydrolysis stage on the ribosome. The chain is Elongation factor Ts from Haemophilus ducreyi (strain 35000HP / ATCC 700724).